Consider the following 254-residue polypeptide: UPF0246 protein FTN_1542 (254 aa).

This sequence belongs to the UPF0246 family.

This Francisella tularensis subsp. novicida (strain U112) protein is UPF0246 protein FTN_1542.